We begin with the raw amino-acid sequence, 290 residues long: MRIADYSVTKAVLDRHGFTFKKSFGQNFLTDTNILQKIVDTAEIDQNVNVIEIGPGIGALTEFLAENAAEVMAFEIDDRLVPILADTLRDFDNVQVVNQDILKADLQTQIKQFKNPDLPIKVVANLPYYITTPILMHLIESKIPFQEFVVMMQREVADRISAEPNTKAYGSLSIAVQYYMTAKVAFIVPRTVFVPAPNVDSAILKMVRRDQPLIEIKDEDFFFRVSRLSFVHRRKTLWNNLTSHFGKSEDIKTKLEKGLALADIKPSIRGEALSIQDFGKLADALKEVGL.

Positions 27, 29, 54, 75, 100, and 125 each coordinate S-adenosyl-L-methionine.

This sequence belongs to the class I-like SAM-binding methyltransferase superfamily. rRNA adenine N(6)-methyltransferase family. RsmA subfamily.

Its subcellular location is the cytoplasm. It catalyses the reaction adenosine(1518)/adenosine(1519) in 16S rRNA + 4 S-adenosyl-L-methionine = N(6)-dimethyladenosine(1518)/N(6)-dimethyladenosine(1519) in 16S rRNA + 4 S-adenosyl-L-homocysteine + 4 H(+). In terms of biological role, specifically dimethylates two adjacent adenosines (A1518 and A1519) in the loop of a conserved hairpin near the 3'-end of 16S rRNA in the 30S particle. May play a critical role in biogenesis of 30S subunits. In Streptococcus pyogenes serotype M5 (strain Manfredo), this protein is Ribosomal RNA small subunit methyltransferase A.